A 242-amino-acid chain; its full sequence is Probable 2-phosphosulfolactate phosphatase (242 aa).

The protein belongs to the ComB family. Requires Mg(2+) as cofactor.

It catalyses the reaction (2R)-O-phospho-3-sulfolactate + H2O = (2R)-3-sulfolactate + phosphate. The protein is Probable 2-phosphosulfolactate phosphatase of Caldicellulosiruptor saccharolyticus (strain ATCC 43494 / DSM 8903 / Tp8T 6331).